The chain runs to 222 residues: Orotate phosphoribosyltransferase (222 aa).

Lysine 29 is a 5-phospho-alpha-D-ribose 1-diphosphate binding site. 37–38 (FF) serves as a coordination point for orotate. Residues 75-76 (YK), arginine 101, lysine 102, lysine 105, histidine 107, and 126-134 (DDVISAGTS) contribute to the 5-phospho-alpha-D-ribose 1-diphosphate site. Orotate contacts are provided by serine 130 and arginine 158.

It belongs to the purine/pyrimidine phosphoribosyltransferase family. PyrE subfamily. In terms of assembly, homodimer. The cofactor is Mg(2+).

It catalyses the reaction orotidine 5'-phosphate + diphosphate = orotate + 5-phospho-alpha-D-ribose 1-diphosphate. It functions in the pathway pyrimidine metabolism; UMP biosynthesis via de novo pathway; UMP from orotate: step 1/2. Its function is as follows. Catalyzes the transfer of a ribosyl phosphate group from 5-phosphoribose 1-diphosphate to orotate, leading to the formation of orotidine monophosphate (OMP). In Polynucleobacter asymbioticus (strain DSM 18221 / CIP 109841 / QLW-P1DMWA-1) (Polynucleobacter necessarius subsp. asymbioticus), this protein is Orotate phosphoribosyltransferase.